A 117-amino-acid chain; its full sequence is Putative membrane protein insertion efficiency factor (117 aa).

The interval 87–117 (RKGGPSAAEPAIEGHIPSSPAAETPSHVQGA) is disordered.

Belongs to the UPF0161 family.

The protein localises to the cell membrane. Functionally, could be involved in insertion of integral membrane proteins into the membrane. The sequence is that of Putative membrane protein insertion efficiency factor from Streptomyces avermitilis (strain ATCC 31267 / DSM 46492 / JCM 5070 / NBRC 14893 / NCIMB 12804 / NRRL 8165 / MA-4680).